Consider the following 179-residue polypeptide: Large ribosomal subunit protein uL5 (179 aa).

Belongs to the universal ribosomal protein uL5 family. As to quaternary structure, part of the 50S ribosomal subunit; part of the 5S rRNA/L5/L18/L25 subcomplex. Contacts the 5S rRNA and the P site tRNA. Forms a bridge to the 30S subunit in the 70S ribosome.

Its function is as follows. This is one of the proteins that bind and probably mediate the attachment of the 5S RNA into the large ribosomal subunit, where it forms part of the central protuberance. In the 70S ribosome it contacts protein S13 of the 30S subunit (bridge B1b), connecting the 2 subunits; this bridge is implicated in subunit movement. Contacts the P site tRNA; the 5S rRNA and some of its associated proteins might help stabilize positioning of ribosome-bound tRNAs. In Pectobacterium carotovorum subsp. carotovorum (strain PC1), this protein is Large ribosomal subunit protein uL5.